Consider the following 641-residue polypeptide: Phosphomethylpyrimidine synthase (641 aa).

The span at 1 to 12 shows a compositional bias: polar residues; sequence MTDTSTQNTATP. The interval 1 to 25 is disordered; sequence MTDTSTQNTATPTDEYGAEIHPKHS. Substrate-binding positions include Asn-200, Met-229, Tyr-258, His-294, 314 to 316, 355 to 358, and Glu-394; these read SRG and DGLR. His-398 serves as a coordination point for Zn(2+). Substrate is bound at residue Tyr-421. Residue His-462 participates in Zn(2+) binding. [4Fe-4S] cluster contacts are provided by Cys-542, Cys-545, and Cys-550.

This sequence belongs to the ThiC family. [4Fe-4S] cluster serves as cofactor.

The enzyme catalyses 5-amino-1-(5-phospho-beta-D-ribosyl)imidazole + S-adenosyl-L-methionine = 4-amino-2-methyl-5-(phosphooxymethyl)pyrimidine + CO + 5'-deoxyadenosine + formate + L-methionine + 3 H(+). It participates in cofactor biosynthesis; thiamine diphosphate biosynthesis. In terms of biological role, catalyzes the synthesis of the hydroxymethylpyrimidine phosphate (HMP-P) moiety of thiamine from aminoimidazole ribotide (AIR) in a radical S-adenosyl-L-methionine (SAM)-dependent reaction. This chain is Phosphomethylpyrimidine synthase, found in Corynebacterium jeikeium (strain K411).